Consider the following 375-residue polypeptide: MASKPEKRVASSVFITLAPLRRDVAMAEEVRQAVCEARRGRPWEAPAPMKTPEAGLEGRPSPWTPPGRAAATVPAAPMQLSNGGCPPPPPVLDGEDALPDLDLFPPPPPPPPVLLPSEEEAPAPMGASLIADLEQLHLSPPLPPPPPQAPAERPSVQPSPLRPMEEELPPPPAERVEKGASTDICAFCHKTVSPRELAVEAMKRQYHAQCFTCRTCRRQLAGQSFYQKDGRPLCEPCYQDTLERCGKCGEVVRDHIIRALGQAFHPSCFTCVTCARCIGDESFALGSQNEVYCLDDFYRKFAPVCSICENPIIPRDGKDAFKIECMGRSFHENCYRCEDCRILLSVEPTDQGCYPLNNRLFCKPCHVKRSAAGCC.

Residues 1–70 (MASKPEKRVA…SPWTPPGRAA (70 aa)) are filamin-binding. Disordered stretches follow at residues 43 to 119 (WEAP…PSEE) and 137 to 176 (HLSPPLPPPPPQAPAERPSVQPSPLRPMEEELPPPPAERV). Pro residues-rich tracts occupy residues 104–114 (FPPPPPPPPVL) and 140–149 (PPLPPPPPQA). Residues 150 to 159 (PAERPSVQPS) show a composition bias toward low complexity. LIM zinc-binding domains are found at residues 183–244 (DICA…TLER), 245–302 (CGKC…RKFA), and 303–372 (PVCS…RSAA). An FERMT2-binding region spans residues 278–375 (IGDESFALGS…HVKRSAAGCC (98 aa)).

In terms of assembly, interacts with FERMT2, FLNA, FLNB and FLNC. Interacts with NKX2-5.

It localises to the cell junction. Its subcellular location is the focal adhesion. The protein localises to the cytoplasm. It is found in the cytoskeleton. The protein resides in the stress fiber. Serves as an anchoring site for cell-ECM adhesion proteins and filamin-containing actin filaments. Is implicated in cell shape modulation (spreading) and motility. May participate in the regulation of filamin-mediated cross-linking and stabilization of actin filaments. May also regulate the assembly of filamin-containing signaling complexes that control actin assembly. Promotes dissociation of FLNA from ITGB3 and ITGB7. Promotes activation of integrins and regulates integrin-mediated cell-cell adhesion. In Pongo abelii (Sumatran orangutan), this protein is Filamin-binding LIM protein 1 (FBLIM1).